A 122-amino-acid chain; its full sequence is MTKLSRKLQTQKRHRRLRRYLIGDATRPRLSVYRSNNHIYAQVIDDSAQTTICSASTVDKELKEKSEKLPSDCNSSSIVGKLLAKRAIKKGIKQVIFDRGGNLYHGRVKALADAAREAGLEF.

The protein belongs to the universal ribosomal protein uL18 family. Part of the 50S ribosomal subunit; part of the 5S rRNA/L5/L18/L25 subcomplex. Contacts the 5S and 23S rRNAs.

Functionally, this is one of the proteins that bind and probably mediate the attachment of the 5S RNA into the large ribosomal subunit, where it forms part of the central protuberance. The protein is Large ribosomal subunit protein uL18 of Prochlorococcus marinus (strain AS9601).